The sequence spans 315 residues: Porphobilinogen deaminase (315 aa).

An S-(dipyrrolylmethanemethyl)cysteine modification is found at cysteine 234.

It belongs to the HMBS family. Monomer. Dipyrromethane serves as cofactor.

The enzyme catalyses 4 porphobilinogen + H2O = hydroxymethylbilane + 4 NH4(+). It participates in porphyrin-containing compound metabolism; protoporphyrin-IX biosynthesis; coproporphyrinogen-III from 5-aminolevulinate: step 2/4. In terms of biological role, tetrapolymerization of the monopyrrole PBG into the hydroxymethylbilane pre-uroporphyrinogen in several discrete steps. The protein is Porphobilinogen deaminase of Mycobacterium avium (strain 104).